The chain runs to 90 residues: DNA/RNA-binding protein Alba (90 aa).

Lys8 carries the N6-acetyllysine modification.

It belongs to the histone-like Alba family. Acetylated. Acetylation at Lys-8 decreases DNA-binding affinity.

It is found in the cytoplasm. The protein resides in the chromosome. Its function is as follows. Binds double-stranded DNA tightly but without sequence specificity. Involved in DNA compaction. In Nanoarchaeum equitans (strain Kin4-M), this protein is DNA/RNA-binding protein Alba.